The sequence spans 904 residues: Putative pentatricopeptide repeat-containing protein At1g19290 (904 aa).

19 PPR repeats span residues 154–188, 189–223, 224–254, 260–294, 295–329, 330–364, 365–399, 400–434, 435–469, 470–504, 505–539, 540–574, 575–609, 610–644, 645–679, 718–753, 754–788, 789–823, and 824–858; these read SPTV…GRIP, SLLS…EVSP, DVFT…TESS, NVVT…GVSR, NVVT…KLVA, DQHM…GVRT, NTTI…SLKP, DHHT…EVVP, TVMT…GVNA, DEIS…GLLT, DTIT…RCKP, AVQT…GIFP, TIEM…GLTP, TVAT…GITL, NVNI…DLLL, NNIV…RFIP, DEYT…GIIP, NIVT…GITP, and NAIT…GLVR.

The protein belongs to the PPR family. P subfamily.

This chain is Putative pentatricopeptide repeat-containing protein At1g19290, found in Arabidopsis thaliana (Mouse-ear cress).